A 602-amino-acid polypeptide reads, in one-letter code: UvrABC system protein C (602 aa).

In terms of domain architecture, GIY-YIG spans 17–94 (KTSGCYKMYS…IKKYKPTYNI (78 aa)). The UVR domain occupies 199–234 (SKLLNDIEIKMKEVIMKENFEAAIKLKETKKSLIEI).

This sequence belongs to the UvrC family. Interacts with UvrB in an incision complex.

The protein resides in the cytoplasm. Functionally, the UvrABC repair system catalyzes the recognition and processing of DNA lesions. UvrC both incises the 5' and 3' sides of the lesion. The N-terminal half is responsible for the 3' incision and the C-terminal half is responsible for the 5' incision. This Borrelia recurrentis (strain A1) protein is UvrABC system protein C.